Consider the following 479-residue polypeptide: MEYRAVIGLEVHVQLNTNTKIFCGCSTKFGAEPNSQTCPVCLGMPGALPVLNRKVVEYAIKAGLATNCEIAPRSIFARKNYFYPDLPKGYQISQYELPICSAGHLDIQVEGTAKRIGITRIHMEEDAGKLVHADVPGVGDDSCVDLNRACTPLLEIVSEPDLRSADEAVAYLKKLHQIVVYLGISDGNMEEGSFRCDANVSVMRVGADKFGTRTETKNVNSFKFVKQAIEYEIERQIEVIEDGGKIVQETRLFDPNTGVTRSMRGKEEAHDYRYFPDPDLVPLVISNDWVEDVRLGLPELPEAKRLRYMDELGLPAYDAEVLTASRELADYFEACLEFHSQPKPVANWVMGEVTRALNEENRSITDAPVTPQLLAELLQLIDKGTISGKIAKTVFDEMWRTGKAPAKVVEEKGLVQVSDTGEIEKIIDEVLAREAGQVAEYRSGKDKLFGFFVGQVMRASKGKANPAVVNELLLKKLQG.

Belongs to the GatB/GatE family. GatB subfamily. In terms of assembly, heterotrimer of A, B and C subunits.

It carries out the reaction L-glutamyl-tRNA(Gln) + L-glutamine + ATP + H2O = L-glutaminyl-tRNA(Gln) + L-glutamate + ADP + phosphate + H(+). It catalyses the reaction L-aspartyl-tRNA(Asn) + L-glutamine + ATP + H2O = L-asparaginyl-tRNA(Asn) + L-glutamate + ADP + phosphate + 2 H(+). Allows the formation of correctly charged Asn-tRNA(Asn) or Gln-tRNA(Gln) through the transamidation of misacylated Asp-tRNA(Asn) or Glu-tRNA(Gln) in organisms which lack either or both of asparaginyl-tRNA or glutaminyl-tRNA synthetases. The reaction takes place in the presence of glutamine and ATP through an activated phospho-Asp-tRNA(Asn) or phospho-Glu-tRNA(Gln). This chain is Aspartyl/glutamyl-tRNA(Asn/Gln) amidotransferase subunit B, found in Geotalea daltonii (strain DSM 22248 / JCM 15807 / FRC-32) (Geobacter daltonii).